The primary structure comprises 782 residues: Calcium-independent phospholipase A2-gamma (782 aa).

N-linked (GlcNAc...) asparagine glycosylation occurs at asparagine 4. Disordered stretches follow at residues 219 to 275 (EKMS…PSAI) and 317 to 343 (SKSQ…AEEK). Residues 220-248 (KMSQQKENEHFRDKSELEDKKVEEGKLRS) are compositionally biased toward basic and acidic residues. An N-linked (GlcNAc...) asparagine glycan is attached at asparagine 361. Residues 445–640 (LSIDGGGTRG…LLNNPSALAM (196 aa)) enclose the PNPLA domain. The GXGXXG motif lies at 449 to 454 (GGGTRG). Residues 475–495 (LFDYICGVSTGAILAFMLGLF) form a helical membrane-spanning segment. Positions 481-485 (GVSTG) match the GXSXG motif. Catalysis depends on serine 483, which acts as the Nucleophile. Aspartate 627 acts as the Proton acceptor in catalysis. Positions 627 to 629 (DGG) match the DGA/G motif. Residue lysine 736 is modified to N6-succinyllysine.

Expressed in parenchymal tissues including heart, skeletal muscle, placenta, brain, liver and pancreas. Also expressed in bronchial epithelial cells and kidney. Highest expression is observed in skeletal muscle and heart.

It localises to the endoplasmic reticulum membrane. The protein localises to the mitochondrion membrane. It is found in the peroxisome membrane. It catalyses the reaction a 1,2-diacyl-sn-glycero-3-phosphocholine + H2O = a 1-acyl-sn-glycero-3-phosphocholine + a fatty acid + H(+). It carries out the reaction a 1,2-diacyl-sn-glycero-3-phosphocholine + H2O = a 2-acyl-sn-glycero-3-phosphocholine + a fatty acid + H(+). The enzyme catalyses a 1,2-diacyl-sn-glycero-3-phosphoethanolamine + H2O = a 1-acyl-sn-glycero-3-phosphoethanolamine + a fatty acid + H(+). The catalysed reaction is a 1-O-(1Z-alkenyl)-2-acyl-sn-glycero-3-phosphocholine + H2O = a 1-O-(1Z-alkenyl)-sn-glycero-3-phosphocholine + a fatty acid + H(+). It catalyses the reaction a 1-acyl-sn-glycero-3-phosphocholine + H2O = sn-glycerol 3-phosphocholine + a fatty acid + H(+). It carries out the reaction 1-acyl-2-(9Z,12Z)-octadecadienoyl-sn-glycero-3-phosphocholine + H2O = a 1-acyl-sn-glycero-3-phosphocholine + (9Z,12Z)-octadecadienoate + H(+). The enzyme catalyses 1-acyl-2-(5Z,8Z,11Z,14Z-eicosatetraenoyl)-sn-glycero-3-phosphocholine + H2O = a 1-acyl-sn-glycero-3-phosphocholine + (5Z,8Z,11Z,14Z)-eicosatetraenoate + H(+). The catalysed reaction is 1-hexadecanoyl-2-(5Z,8Z,11Z,14Z-eicosatetraenoyl)-sn-glycero-3-phosphocholine + H2O = 1-hexadecanoyl-sn-glycero-3-phosphocholine + (5Z,8Z,11Z,14Z)-eicosatetraenoate + H(+). It catalyses the reaction 1-octadecanoyl-2-(9Z-octadecenoyl)-sn-glycero-3-phosphocholine + H2O = 1-octadecanoyl-sn-glycero-3-phosphocholine + (9Z)-octadecenoate + H(+). It carries out the reaction 1-hexadecanoyl-2-(9Z-octadecenoyl)-sn-glycero-3-phosphocholine + H2O = 1-hexadecanoyl-sn-glycero-3-phosphocholine + (9Z)-octadecenoate + H(+). The enzyme catalyses 1-hexadecanoyl-2-(9Z,12Z-octadecadienoyl)-sn-glycero-3-phosphocholine + H2O = (9Z,12Z)-octadecadienoate + 1-hexadecanoyl-sn-glycero-3-phosphocholine + H(+). The catalysed reaction is 1-acyl-2-(9Z,12Z)-octadecadienoyl-sn-glycero-3-phosphoethanolamine + H2O = a 1-acyl-sn-glycero-3-phosphoethanolamine + (9Z,12Z)-octadecadienoate + H(+). It catalyses the reaction 1-acyl-2-(5Z,8Z,11Z,14Z)-eicosatetraenoyl-sn-glycero-3-phosphoethanolamine + H2O = a 1-acyl-sn-glycero-3-phosphoethanolamine + (5Z,8Z,11Z,14Z)-eicosatetraenoate + H(+). It carries out the reaction 1-hexadecanoyl-2-(5Z,8Z,11Z,14Z-eicosatetraenoyl)-sn-glycero-3-phosphoethanolamine + H2O = 1-hexadecanoyl-sn-glycero-3-phosphoethanolamine + (5Z,8Z,11Z,14Z)-eicosatetraenoate + H(+). The enzyme catalyses 1-hexadecanoyl-2-(5Z,8Z,11Z,14Z-eicosatetraenoyl)-sn-glycero-3-phosphocholine + H2O = 2-(5Z,8Z,11Z,14Z)-eicosatetraenoyl-sn-glycero-3-phosphocholine + hexadecanoate + H(+). The catalysed reaction is 1-octadecanoyl-2-(9Z-octadecenoyl)-sn-glycero-3-phosphocholine + H2O = 2-(9Z-octadecenoyl)-sn-glycero-3-phosphocholine + octadecanoate + H(+). It catalyses the reaction 1-hexadecanoyl-2-(4Z,7Z,10Z,13Z,16Z,19Z-docosahexaenoyl)-sn-glycero-3-phosphocholine + H2O = 2-(4Z,7Z,10Z,13Z,16Z,19Z-docosahexaenoyl)-sn-glycero-3-phosphocholine + hexadecanoate + H(+). It carries out the reaction 1-O-(1Z)-hexadecenyl-2 (5Z,8Z,11Z,14Z)-eicosatetraenoyl-sn-glycero-3-phosphocholine + H2O = 1-(1Z-hexadecenyl)-sn-glycero-3-phosphocholine + (5Z,8Z,11Z,14Z)-eicosatetraenoate + H(+). The enzyme catalyses 1-O-(1Z-hexadecenyl)-2-(9Z-octadecenoyl)-sn-glycero-3-phosphocholine + H2O = 1-(1Z-hexadecenyl)-sn-glycero-3-phosphocholine + (9Z)-octadecenoate + H(+). The catalysed reaction is 1-hexadecanoyl-sn-glycero-3-phosphocholine + H2O = sn-glycerol 3-phosphocholine + hexadecanoate + H(+). It catalyses the reaction 1',3'-bis-[1,2-di-(9Z,12Z-octadecadienoyl)-sn-glycero-3-phospho]-glycerol + H2O = 1'-[1,2-di-(9Z,12Z-octadecadienoyl)-sn-glycero-3-phospho]-3'-[1-(9Z,12Z-octadecadienoyl)-sn-glycero-3-phospho]-glycerol + (9Z,12Z)-octadecadienoate + H(+). It carries out the reaction 1'-[1-acyl-2-(9-hydroxy-(10E,12Z)-octadecadienoyl)-sn-glycero-3-phospho]-3'-[1,2-diacyl-sn-glycero-3-phospho]-glycerol + H2O = 9-hydroxy-(10E,12Z)-octadecadienoate + 1'-[1,2-diacyl-sn-glycero-3-phospho],3'-[1-acyl-sn-glycero-3-phospho]-glycerol + H(+). It participates in phospholipid metabolism. Calcium-independent phospholipase. Inhibited by (E)-6-bromomethylene-3-1-naphthalenyl-2H-tetrahydropyran-2-one (BEL). The activity toward 1-hexadecanoyl-2-(5Z,8Z,11Z,14Z-eicosatetraenoyl)-sn-glycero-3-phosphocholine is stimulated by cardiolipin. Functionally, calcium-independent and membrane-bound phospholipase, that catalyzes the esterolytic cleavage of fatty acids from glycerophospholipids to yield free fatty acids and lysophospholipids, hence regulating membrane physical properties and the release of lipid second messengers and growth factors. Hydrolyzes phosphatidylethanolamine, phosphatidylcholine and probably phosphatidylinositol with a possible preference for the former. Also has a broad substrate specificity in terms of fatty acid moieties, hydrolyzing saturated and mono-unsaturated fatty acids at nearly equal rates from either the sn-1 or sn-2 position in diacyl phosphatidylcholine. However, has a weak activity toward polyunsaturated fatty acids at the sn-2 position, and thereby favors the production of 2-arachidonoyl lysophosphatidylcholine, a key branch point metabolite in eicosanoid signaling. On the other hand, can produce arachidonic acid from the sn-1 position of diacyl phospholipid and from the sn-2 position of arachidonate-containing plasmalogen substrates. Therefore, plays an important role in the mobilization of arachidonic acid in response to cellular stimuli and the generation of lipid second messengers. Can also hydrolyze lysophosphatidylcholine. In the mitochondrial compartment, catalyzes the hydrolysis and release of oxidized aliphatic chains from cardiolipin and integrates mitochondrial bioenergetics and signaling. It is essential for maintaining efficient bioenergetic mitochondrial function through tailoring mitochondrial membrane lipid metabolism and composition. In Homo sapiens (Human), this protein is Calcium-independent phospholipase A2-gamma.